We begin with the raw amino-acid sequence, 481 residues long: Innexin inx6 (481 aa).

The Cytoplasmic segment spans residues 1-21 (MYAAVKPLSNYLRLKTVRIYD). A helical transmembrane segment spans residues 22–42 (PIFTLHSKCTIVILLTCTFLL). Topologically, residues 43–144 (SAKQYFGEPI…VTKRMYLRYY (102 aa)) are extracellular. A helical transmembrane segment spans residues 145–165 (QWVFMILLFQSLLFYFPSFLW). Residues 166–220 (KVWEGQRMEQLCCEVGDALIVEATYRTRLQMLTRYFRAQFAPIHWCYSIKYAFCE) are Cytoplasmic-facing. Residues 221-241 (LLNVFISILNFWLMDVVFNGF) traverse the membrane as a helical segment. Residues 242 to 302 (WYKYIHALAA…VLPLNILNEK (61 aa)) are Extracellular-facing. Residues 303–323 (IFAVLYVWFLFIALLAIMNIL) form a helical membrane-spanning segment. Over 324–481 (YRLLVICCPE…MDRFFHESHA (158 aa)) the chain is Cytoplasmic.

This sequence belongs to the pannexin family. Uniform expression in the imaginal wing disk. Expressed in an outer layer of the pupal developing CNS. Also expressed in pupal retina: cone cells and primary pigment cells.

It localises to the cell membrane. Its subcellular location is the cell junction. The protein localises to the gap junction. Functionally, structural components of the gap junctions. In Drosophila melanogaster (Fruit fly), this protein is Innexin inx6 (Inx6).